We begin with the raw amino-acid sequence, 324 residues long: Probable cell division protein WhiA (324 aa).

A DNA-binding region (H-T-H motif) is located at residues Ser275–Asp308.

This sequence belongs to the WhiA family.

Its function is as follows. Involved in cell division and chromosome segregation. The protein is Probable cell division protein WhiA of Acidothermus cellulolyticus (strain ATCC 43068 / DSM 8971 / 11B).